The sequence spans 349 residues: Phosphate acyltransferase (349 aa).

This sequence belongs to the PlsX family. In terms of assembly, homodimer. Probably interacts with PlsY.

Its subcellular location is the cytoplasm. It carries out the reaction a fatty acyl-[ACP] + phosphate = an acyl phosphate + holo-[ACP]. Its pathway is lipid metabolism; phospholipid metabolism. Functionally, catalyzes the reversible formation of acyl-phosphate (acyl-PO(4)) from acyl-[acyl-carrier-protein] (acyl-ACP). This enzyme utilizes acyl-ACP as fatty acyl donor, but not acyl-CoA. This is Phosphate acyltransferase from Albidiferax ferrireducens (strain ATCC BAA-621 / DSM 15236 / T118) (Rhodoferax ferrireducens).